Consider the following 132-residue polypeptide: Phosphoribosyl-AMP cyclohydrolase (132 aa).

Mg(2+) is bound at residue Asp-81. Residue Cys-82 participates in Zn(2+) binding. Mg(2+) is bound by residues Asp-83 and Asp-85. The Zn(2+) site is built by Cys-99 and Cys-106.

The protein belongs to the PRA-CH family. As to quaternary structure, homodimer. Mg(2+) is required as a cofactor. Requires Zn(2+) as cofactor.

It localises to the cytoplasm. The enzyme catalyses 1-(5-phospho-beta-D-ribosyl)-5'-AMP + H2O = 1-(5-phospho-beta-D-ribosyl)-5-[(5-phospho-beta-D-ribosylamino)methylideneamino]imidazole-4-carboxamide. Its pathway is amino-acid biosynthesis; L-histidine biosynthesis; L-histidine from 5-phospho-alpha-D-ribose 1-diphosphate: step 3/9. Its function is as follows. Catalyzes the hydrolysis of the adenine ring of phosphoribosyl-AMP. The protein is Phosphoribosyl-AMP cyclohydrolase of Chromobacterium violaceum (strain ATCC 12472 / DSM 30191 / JCM 1249 / CCUG 213 / NBRC 12614 / NCIMB 9131 / NCTC 9757 / MK).